Reading from the N-terminus, the 198-residue chain is Probable thymidylate kinase (198 aa).

7–14 (GIDGAGKS) contacts ATP.

It belongs to the thymidylate kinase family.

It catalyses the reaction dTMP + ATP = dTDP + ADP. The protein is Probable thymidylate kinase of Methanocorpusculum labreanum (strain ATCC 43576 / DSM 4855 / Z).